A 479-amino-acid polypeptide reads, in one-letter code: GTPase Obg (479 aa).

Residues 2-159 enclose the Obg domain; sequence PRFVDRVVIH…RDLTLELKTV (158 aa). Residues 160–340 enclose the OBG-type G domain; that stretch reads ADVGLVGFPS…LIFGLSQMIS (181 aa). Residues 166-173, 191-195, 212-215, 292-295, and 321-323 contribute to the GTP site; these read GFPSAGKS, FTTLV, DVPG, NKID, and STA. Residues serine 173 and threonine 193 each coordinate Mg(2+). The OCT domain maps to 358–436; it reads PIPVDDSGFT…IGEMTFDWEP (79 aa). The disordered stretch occupies residues 434-479; sequence WEPQTPAGEPVAMSGRGTDPRLDSNKRVGAAERKAARSRRREHGDG. Positions 451–468 are enriched in basic and acidic residues; it reads TDPRLDSNKRVGAAERKA. Over residues 469 to 479 the composition is skewed to basic residues; it reads ARSRRREHGDG.

It belongs to the TRAFAC class OBG-HflX-like GTPase superfamily. OBG GTPase family. In terms of assembly, monomer. Mg(2+) is required as a cofactor.

It localises to the cytoplasm. Its function is as follows. An essential GTPase which binds GTP, GDP and possibly (p)ppGpp with moderate affinity, with high nucleotide exchange rates and a fairly low GTP hydrolysis rate. Plays a role in control of the cell cycle, stress response, ribosome biogenesis and in those bacteria that undergo differentiation, in morphogenesis control. This Mycobacterium tuberculosis (strain ATCC 25177 / H37Ra) protein is GTPase Obg.